The sequence spans 174 residues: 2-C-methyl-D-erythritol 2,4-cyclodiphosphate synthase (174 aa).

Positions 13, 15, and 61 each coordinate a divalent metal cation. Position 13 to 15 (13 to 15 (DAH)) interacts with 4-CDP-2-C-methyl-D-erythritol 2-phosphate. 4-CDP-2-C-methyl-D-erythritol 2-phosphate is bound by residues 75 to 77 (DIG), 149 to 152 (TTTD), Phe-156, and Arg-159.

This sequence belongs to the IspF family. In terms of assembly, homotrimer. The cofactor is a divalent metal cation.

The enzyme catalyses 4-CDP-2-C-methyl-D-erythritol 2-phosphate = 2-C-methyl-D-erythritol 2,4-cyclic diphosphate + CMP. It participates in isoprenoid biosynthesis; isopentenyl diphosphate biosynthesis via DXP pathway; isopentenyl diphosphate from 1-deoxy-D-xylulose 5-phosphate: step 4/6. Functionally, involved in the biosynthesis of isopentenyl diphosphate (IPP) and dimethylallyl diphosphate (DMAPP), two major building blocks of isoprenoid compounds. Catalyzes the conversion of 4-diphosphocytidyl-2-C-methyl-D-erythritol 2-phosphate (CDP-ME2P) to 2-C-methyl-D-erythritol 2,4-cyclodiphosphate (ME-CPP) with a corresponding release of cytidine 5-monophosphate (CMP). The polypeptide is 2-C-methyl-D-erythritol 2,4-cyclodiphosphate synthase (Bifidobacterium longum subsp. infantis (strain ATCC 15697 / DSM 20088 / JCM 1222 / NCTC 11817 / S12)).